The primary structure comprises 375 residues: Queuine tRNA-ribosyltransferase (375 aa).

The active-site Proton acceptor is Asp-90. Substrate-binding positions include 90-94, Asp-144, Gln-193, and Gly-220; that span reads DSGGF. Residues 251–257 form an RNA binding region; it reads GVGTPED. Asp-270 serves as the catalytic Nucleophile. An RNA binding; important for wobble base 34 recognition region spans residues 275–279; that stretch reads TRNAR. Positions 308, 310, 313, and 339 each coordinate Zn(2+).

It belongs to the queuine tRNA-ribosyltransferase family. In terms of assembly, homodimer. Within each dimer, one monomer is responsible for RNA recognition and catalysis, while the other monomer binds to the replacement base PreQ1. Zn(2+) is required as a cofactor.

The enzyme catalyses 7-aminomethyl-7-carbaguanine + guanosine(34) in tRNA = 7-aminomethyl-7-carbaguanosine(34) in tRNA + guanine. It participates in tRNA modification; tRNA-queuosine biosynthesis. Functionally, catalyzes the base-exchange of a guanine (G) residue with the queuine precursor 7-aminomethyl-7-deazaguanine (PreQ1) at position 34 (anticodon wobble position) in tRNAs with GU(N) anticodons (tRNA-Asp, -Asn, -His and -Tyr). Catalysis occurs through a double-displacement mechanism. The nucleophile active site attacks the C1' of nucleotide 34 to detach the guanine base from the RNA, forming a covalent enzyme-RNA intermediate. The proton acceptor active site deprotonates the incoming PreQ1, allowing a nucleophilic attack on the C1' of the ribose to form the product. After dissociation, two additional enzymatic reactions on the tRNA convert PreQ1 to queuine (Q), resulting in the hypermodified nucleoside queuosine (7-(((4,5-cis-dihydroxy-2-cyclopenten-1-yl)amino)methyl)-7-deazaguanosine). In Methylibium petroleiphilum (strain ATCC BAA-1232 / LMG 22953 / PM1), this protein is Queuine tRNA-ribosyltransferase.